Consider the following 77-residue polypeptide: Distinctin-like peptide (77 aa).

The signal sequence occupies residues 1–19; sequence LKKSLFLVTFLALVPLFLC. Residues 20–39 constitute a propeptide that is removed on maturation; sequence EEEKREEENEERQDDDQSEE.

The protein belongs to the frog skin active peptide (FSAP) family. In terms of tissue distribution, expressed by the skin glands.

The protein resides in the secreted. Its function is as follows. Has antimicrobial activity. This is Distinctin-like peptide from Pithecopus azureus (Orange-legged monkey tree frog).